A 217-amino-acid chain; its full sequence is Methylthioribulose-1-phosphate dehydratase (217 aa).

Zn(2+) contacts are provided by histidine 106 and histidine 108.

This sequence belongs to the aldolase class II family. MtnB subfamily. Zn(2+) serves as cofactor.

It carries out the reaction 5-(methylsulfanyl)-D-ribulose 1-phosphate = 5-methylsulfanyl-2,3-dioxopentyl phosphate + H2O. It participates in amino-acid biosynthesis; L-methionine biosynthesis via salvage pathway; L-methionine from S-methyl-5-thio-alpha-D-ribose 1-phosphate: step 2/6. In terms of biological role, catalyzes the dehydration of methylthioribulose-1-phosphate (MTRu-1-P) into 2,3-diketo-5-methylthiopentyl-1-phosphate (DK-MTP-1-P). This chain is Methylthioribulose-1-phosphate dehydratase, found in Xanthomonas campestris pv. campestris (strain 8004).